A 1442-amino-acid polypeptide reads, in one-letter code: Cleavage and polyadenylation specificity factor subunit 1 (1442 aa).

Belongs to the CPSF1 family. As to quaternary structure, component of the CPSF complex, at least composed of CPSF160, CPSF100, CPSF73-I, CPSF73-II, CPSF30, FY and FIPS5. Forms a complex with cleavage and polyadenylation specificity factor (CPSF) subunits FY, CPSF30, CPSF73-I, CPSF 73-II and CPSF100.

Its subcellular location is the nucleus. Functionally, CPSF plays a key role in pre-mRNA 3'-end formation, recognizing the AAUAAA signal sequence and interacting with poly(A)polymerase and other factors to bring about cleavage and poly(A) addition. This subunit is involved in the RNA recognition step of the polyadenylation reaction. This chain is Cleavage and polyadenylation specificity factor subunit 1 (CPSF160), found in Arabidopsis thaliana (Mouse-ear cress).